The primary structure comprises 586 residues: Estrogen receptor (586 aa).

The segment at 1–179 is modulating; it reads MTMPLPNKTT…SMESTKETRY (179 aa). Positions 144–173 are disordered; sequence FYRSSSDNRRQSGRERMSSANDKGPPSMES. Over residues 149–160 the composition is skewed to basic and acidic residues; that stretch reads SDNRRQSGRERM. 2 NR C4-type zinc fingers span residues 180 to 200 and 216 to 240; these read CAVC…CEGC and CPAT…LRKC. Positions 180-245 form a DNA-binding region, nuclear receptor; that stretch reads CAVCSDYASG…RLRKCYEVGM (66 aa). Residues 246–302 are hinge; sequence MKGGIRKDRRGGRLLKHKRQKEEQEQKNDVDPSEIRTASIWVNPSVKSMKLSPVLSL. Residues 252-264 show a composition bias toward basic residues; the sequence is KDRRGGRLLKHKR. The tract at residues 252-276 is disordered; that stretch reads KDRRGGRLLKHKRQKEEQEQKNDVD. Residues 265–276 show a composition bias toward basic and acidic residues; it reads QKEEQEQKNDVD. The region spanning 303–539 is the NR LBD domain; the sequence is TAEQLISALM…DLLLEMLDAH (237 aa). Positions 543–556 are enriched in basic and acidic residues; sequence TPKDKTTTQEEDSR. Residues 543–569 form a disordered region; that stretch reads TPKDKTTTQEEDSRSPPTTTVNGASPC.

This sequence belongs to the nuclear hormone receptor family. NR3 subfamily. As to quaternary structure, binds DNA as a homodimer. Can form a heterodimer with ER-beta.

The protein localises to the nucleus. In terms of biological role, the steroid hormones and their receptors are involved in the regulation of eukaryotic gene expression and affect cellular proliferation and differentiation in target tissues. The polypeptide is Estrogen receptor (esr1) (Xenopus laevis (African clawed frog)).